The primary structure comprises 301 residues: Ubiquinone biosynthesis protein COQ4, mitochondrial (301 aa).

The transit peptide at methionine 1 to tyrosine 46 directs the protein to the mitochondrion. The disordered stretch occupies residues glutamine 14–leucine 48. Over residues proline 38–leucine 48 the composition is skewed to polar residues. Residues histidine 185, aspartate 186, histidine 189, and glutamate 201 each contribute to the Zn(2+) site.

It belongs to the COQ4 family. As to quaternary structure, component of a multi-subunit COQ enzyme complex, composed of at least COQ3, COQ4, COQ5, COQ6, COQ7 and COQ9. The cofactor is Zn(2+).

The protein localises to the mitochondrion inner membrane. It carries out the reaction a 4-hydroxy-3-methoxy-5-(all-trans-polyprenyl)benzoate + H(+) = a 2-methoxy-6-(all-trans-polyprenyl)phenol + CO2. The protein operates within cofactor biosynthesis; ubiquinone biosynthesis. In terms of biological role, lyase that catalyzes the C1-decarboxylation of 4-hydroxy-3-methoxy-5-(all-trans-polyprenyl)benzoic acid into 2-methoxy-6-(all-trans-polyprenyl)phenol during ubiquinone biosynthesis. This is Ubiquinone biosynthesis protein COQ4, mitochondrial from Podospora anserina (strain S / ATCC MYA-4624 / DSM 980 / FGSC 10383) (Pleurage anserina).